Consider the following 323-residue polypeptide: Leucine-rich repeat-containing protein 46 (323 aa).

LRR repeat units lie at residues aspartate 49–arginine 70, asparagine 71–threonine 92, serine 93–glutamine 114, and tyrosine 115–proline 135. The region spanning asparagine 146–glutamate 188 is the LRRCT domain. A Phosphothreonine modification is found at threonine 178. 3 positions are modified to phosphoserine: serine 179, serine 185, and serine 186. A coiled-coil region spans residues arginine 203 to histidine 228. The segment at aspartate 252–lysine 323 is disordered. Polar residues predominate over residues alanine 269–serine 290. Over residues alanine 297–alanine 310 the composition is skewed to low complexity. Residue serine 303 is modified to Phosphoserine.

It localises to the cell projection. It is found in the cilium. Its subcellular location is the flagellum. Required for normal spermatogenesis and male fertility. Plays an important role in sperm flagellum biogenesis. The polypeptide is Leucine-rich repeat-containing protein 46 (Lrrc46) (Rattus norvegicus (Rat)).